A 258-amino-acid chain; its full sequence is 1-(5-phosphoribosyl)-5-[(5-phosphoribosylamino)methylideneamino] imidazole-4-carboxamide isomerase (258 aa).

Asp-9 functions as the Proton acceptor in the catalytic mechanism. The Proton donor role is filled by Asp-131.

The protein belongs to the HisA/HisF family.

The protein localises to the cytoplasm. The enzyme catalyses 1-(5-phospho-beta-D-ribosyl)-5-[(5-phospho-beta-D-ribosylamino)methylideneamino]imidazole-4-carboxamide = 5-[(5-phospho-1-deoxy-D-ribulos-1-ylimino)methylamino]-1-(5-phospho-beta-D-ribosyl)imidazole-4-carboxamide. It participates in amino-acid biosynthesis; L-histidine biosynthesis; L-histidine from 5-phospho-alpha-D-ribose 1-diphosphate: step 4/9. The protein is 1-(5-phosphoribosyl)-5-[(5-phosphoribosylamino)methylideneamino] imidazole-4-carboxamide isomerase of Salinibacter ruber (strain DSM 13855 / M31).